A 151-amino-acid polypeptide reads, in one-letter code: Small ribosomal subunit protein uS15 (151 aa).

Position 32 is a phosphoserine (Ser-32). Glycyl lysine isopeptide (Lys-Gly) (interchain with G-Cter in ubiquitin) cross-links involve residues Lys-39 and Lys-43.

Belongs to the universal ribosomal protein uS15 family. As to quaternary structure, component of the small ribosomal subunit (SSU). Mature yeast ribosomes consist of a small (40S) and a large (60S) subunit. The 40S small subunit contains 1 molecule of ribosomal RNA (18S rRNA) and 33 different proteins (encoded by 57 genes). The large 60S subunit contains 3 rRNA molecules (25S, 5.8S and 5S rRNA) and 46 different proteins (encoded by 81 genes).

The protein localises to the cytoplasm. Its function is as follows. Component of the ribosome, a large ribonucleoprotein complex responsible for the synthesis of proteins in the cell. The small ribosomal subunit (SSU) binds messenger RNAs (mRNAs) and translates the encoded message by selecting cognate aminoacyl-transfer RNA (tRNA) molecules. The large subunit (LSU) contains the ribosomal catalytic site termed the peptidyl transferase center (PTC), which catalyzes the formation of peptide bonds, thereby polymerizing the amino acids delivered by tRNAs into a polypeptide chain. The nascent polypeptides leave the ribosome through a tunnel in the LSU and interact with protein factors that function in enzymatic processing, targeting, and the membrane insertion of nascent chains at the exit of the ribosomal tunnel. The polypeptide is Small ribosomal subunit protein uS15 (Saccharomyces cerevisiae (strain ATCC 204508 / S288c) (Baker's yeast)).